The chain runs to 396 residues: Maltose/maltodextrin-binding periplasmic protein (396 aa).

A signal peptide spans 1–26; the sequence is MKIKTGVGILALSALTTMMISAPALA.

The protein belongs to the bacterial solute-binding protein 1 family. In terms of assembly, the complex is composed of two ATP-binding proteins (MalK), two transmembrane proteins (MalG and MalF) and a solute-binding protein (MalE).

The protein localises to the periplasm. Part of the ABC transporter complex MalEFGK involved in maltose/maltodextrin import. Binds maltose and higher maltodextrins. The protein is Maltose/maltodextrin-binding periplasmic protein (malE) of Salmonella typhimurium (strain LT2 / SGSC1412 / ATCC 700720).